Here is a 225-residue protein sequence, read N- to C-terminus: 3-dehydroquinate dehydratase (225 aa).

3-dehydroquinate contacts are provided by residues Ser6, Glu30–Arg32, and Arg62. His118 functions as the Proton donor/acceptor in the catalytic mechanism. Lys143 (schiff-base intermediate with substrate) is an active-site residue. The 3-dehydroquinate site is built by Arg186, Ser205, and Gln209.

This sequence belongs to the type-I 3-dehydroquinase family. As to quaternary structure, homodimer.

The enzyme catalyses 3-dehydroquinate = 3-dehydroshikimate + H2O. It functions in the pathway metabolic intermediate biosynthesis; chorismate biosynthesis; chorismate from D-erythrose 4-phosphate and phosphoenolpyruvate: step 3/7. In terms of biological role, involved in the third step of the chorismate pathway, which leads to the biosynthesis of aromatic amino acids. Catalyzes the cis-dehydration of 3-dehydroquinate (DHQ) and introduces the first double bond of the aromatic ring to yield 3-dehydroshikimate. The protein is 3-dehydroquinate dehydratase of Streptococcus pneumoniae (strain Hungary19A-6).